The chain runs to 450 residues: Interferon-induced protein 75 (450 aa).

One can recognise an HSR domain in the interval 1-108 (MFTLTKALEK…IFRSFRNVGY (108 aa)). 2 disordered regions span residues 131–156 (CSLQ…APRV) and 170–225 (LDEQ…VKDD). The segment covering 143 to 154 (QLSLPSHLSSAP) has biased composition (low complexity). Ser175 and Ser177 each carry phosphoserine. The segment covering 197-212 (SRDHQRKDKEDSREMP) has biased composition (basic and acidic residues). At Ser226 the chain carries Phosphoserine. Disordered stretches follow at residues 238-283 (VLCT…HGVQ) and 318-360 (AQTS…KNDA). Residues 245–267 (KKARRKKRLNWSNSKRGRQKKKP) show a composition bias toward basic residues. Residues 251 to 266 (KRLNWSNSKRGRQKKK) carry the Nuclear localization signal motif. Residues 343 to 353 (TSTAGKTTQVP) are compositionally biased toward polar residues. The 82-residue stretch at 358–439 (NDAVDFLSPT…RQLEQKGLLF (82 aa)) folds into the SAND domain.

It is found in the nucleus. The polypeptide is Interferon-induced protein 75 (Ifi75) (Mus caroli (Ryukyu mouse)).